The primary structure comprises 829 residues: FAST kinase domain-containing protein 1, mitochondrial (829 aa).

Position 346 is an N6-acetyllysine (lysine 346). Positions 761–821 (IAIELLDVRA…KDARMDYLRE (61 aa)) constitute an RAP domain.

Belongs to the FAST kinase family. As to expression, expression detected in spleen, testis, colon, heart, smooth muscle, kidney, brain, lung, liver, brown and white adipose tissue with highest expression in heart and brown adipose tissue.

The protein resides in the mitochondrion. Its function is as follows. Involved in the down-regulation of mitochondrial MT-ND3 mRNA levels which leads to decreased respiratory complex I abundance and activity. This is FAST kinase domain-containing protein 1, mitochondrial (Fastkd1) from Mus musculus (Mouse).